The following is a 102-amino-acid chain: Protein ORF28 (102 aa).

The helical transmembrane segment at 28–48 (VIGLITVLFLLVIGACVYCCI) threads the bilayer.

It is found in the host membrane. In Homo sapiens (Human), this protein is Protein ORF28 (ORF28).